The sequence spans 260 residues: Lysine/arginine/ornithine-binding periplasmic protein (260 aa).

The N-terminal stretch at 1-22 (MKKSILALSLLVGLSTAASSYA) is a signal peptide. Residue D33 participates in L-arginine binding. D33 is a binding site for L-lysine. D33 provides a ligand contact to L-ornithine. Cysteines 60 and 67 form a disulfide. The L-arginine site is built by S91, S92, S94, R99, T143, and D183. L-ornithine-binding residues include S91, S92, S94, R99, T143, and D183. L-lysine is bound by residues S92, S94, R99, and T143.

The protein belongs to the bacterial solute-binding protein 3 family. In terms of assembly, the complex is composed of two ATP-binding proteins (HisP), two transmembrane proteins (HisM and HisQ) and a solute-binding protein (ArgT).

The protein resides in the periplasm. Functionally, part of the ABC transporter complex HisPMQ-ArgT involved in lysine/arginine/ornithine transport. Binds lysine, arginine and ornithine. Stimulates ATPase activity of HisP. The polypeptide is Lysine/arginine/ornithine-binding periplasmic protein (argT) (Escherichia coli (strain K12)).